Consider the following 96-residue polypeptide: Small ribosomal subunit protein bS6 (96 aa).

The protein belongs to the bacterial ribosomal protein bS6 family.

In terms of biological role, binds together with bS18 to 16S ribosomal RNA. The polypeptide is Small ribosomal subunit protein bS6 (Streptococcus mutans serotype c (strain ATCC 700610 / UA159)).